Here is a 201-residue protein sequence, read N- to C-terminus: Peptidyl-tRNA hydrolase (201 aa).

Position 14 (Tyr14) interacts with tRNA. The Proton acceptor role is filled by His19. Residues Tyr64, Asn66, and Asn112 each contribute to the tRNA site.

It belongs to the PTH family. In terms of assembly, monomer.

It is found in the cytoplasm. It catalyses the reaction an N-acyl-L-alpha-aminoacyl-tRNA + H2O = an N-acyl-L-amino acid + a tRNA + H(+). In terms of biological role, hydrolyzes ribosome-free peptidyl-tRNAs (with 1 or more amino acids incorporated), which drop off the ribosome during protein synthesis, or as a result of ribosome stalling. Its function is as follows. Catalyzes the release of premature peptidyl moieties from peptidyl-tRNA molecules trapped in stalled 50S ribosomal subunits, and thus maintains levels of free tRNAs and 50S ribosomes. The sequence is that of Peptidyl-tRNA hydrolase from Bradyrhizobium diazoefficiens (strain JCM 10833 / BCRC 13528 / IAM 13628 / NBRC 14792 / USDA 110).